Here is a 305-residue protein sequence, read N- to C-terminus: Spore coat protein CotA (305 aa).

The protein resides in the spore coat. The protein localises to the spore. It is found in the perispore. Functionally, contributes to maintain proper thickness of the spore coat. May contribute to the formation of polar appendages. May play an important role in assembly of the outer layers of the spore coat. The protein is Spore coat protein CotA of Clostridioides difficile (strain 630) (Peptoclostridium difficile).